A 208-amino-acid polypeptide reads, in one-letter code: Superoxide dismutase [Mn] 2 (208 aa).

Positions 28, 83, 165, and 169 each coordinate Mn(2+).

It belongs to the iron/manganese superoxide dismutase family. As to quaternary structure, homodimer. Mn(2+) serves as cofactor.

It carries out the reaction 2 superoxide + 2 H(+) = H2O2 + O2. In terms of biological role, destroys superoxide anion radicals which are normally produced within the cells and which are toxic to biological systems. The protein is Superoxide dismutase [Mn] 2 (sodA2) of Bacillus anthracis.